The sequence spans 142 residues: Large ribosomal subunit protein uL13 (142 aa).

This sequence belongs to the universal ribosomal protein uL13 family. As to quaternary structure, part of the 50S ribosomal subunit.

In terms of biological role, this protein is one of the early assembly proteins of the 50S ribosomal subunit, although it is not seen to bind rRNA by itself. It is important during the early stages of 50S assembly. This chain is Large ribosomal subunit protein uL13, found in Chromohalobacter salexigens (strain ATCC BAA-138 / DSM 3043 / CIP 106854 / NCIMB 13768 / 1H11).